The primary structure comprises 720 residues: Engulfment and cell motility protein 2 (720 aa).

A Phosphotyrosine modification is found at Tyr-48. In terms of domain architecture, ELMO spans 311 to 485 (AQRDIIFELR…VVREQITRAL (175 aa)). Ser-503 carries the phosphoserine modification. Positions 553-674 (SSFRKIGNRR…LLGKDMSSEL (122 aa)) constitute a PH domain. An SH3-binding motif is present at residues 700-707 (PEAPPPIP). The residue at position 717 (Tyr-717) is a Phosphotyrosine.

In terms of assembly, interacts with the SH3-domain of DOCK1 via its SH3-binding site. Probably part of a complex with DOCK1 and RAC1. Probably part of a complex with DOCK1 and CRK isoform CRK-II. Interacts with ARHGEF16, DOCK4 and EPHA2; mediates activation of RAC1 by EPHA2. Interacts with ADGRB3. Interacts with AUTS2; the interaction is direct. Widely expressed, with a higher expression in skeletal muscle, kidney and placenta.

The protein resides in the cytoplasm. The protein localises to the cytosol. Its subcellular location is the membrane. Functionally, involved in cytoskeletal rearrangements required for phagocytosis of apoptotic cells and cell motility. Acts in association with DOCK1 and CRK. Was initially proposed to be required in complex with DOCK1 to activate Rac Rho small GTPases. May enhance the guanine nucleotide exchange factor (GEF) activity of DOCK1. This is Engulfment and cell motility protein 2 (ELMO2) from Homo sapiens (Human).